The chain runs to 319 residues: Transaldolase (319 aa).

K126 serves as the catalytic Schiff-base intermediate with substrate.

Belongs to the transaldolase family. Type 1 subfamily. As to quaternary structure, homodimer.

The protein localises to the cytoplasm. It carries out the reaction D-sedoheptulose 7-phosphate + D-glyceraldehyde 3-phosphate = D-erythrose 4-phosphate + beta-D-fructose 6-phosphate. It participates in carbohydrate degradation; pentose phosphate pathway; D-glyceraldehyde 3-phosphate and beta-D-fructose 6-phosphate from D-ribose 5-phosphate and D-xylulose 5-phosphate (non-oxidative stage): step 2/3. Its function is as follows. Transaldolase is important for the balance of metabolites in the pentose-phosphate pathway. In Bordetella petrii (strain ATCC BAA-461 / DSM 12804 / CCUG 43448), this protein is Transaldolase.